The following is a 558-amino-acid chain: NAD(P)H-quinone oxidoreductase chain 4 (558 aa).

A run of 15 helical transmembrane segments spans residues 25 to 45 (FPWL…VPFV), 56 to 76 (WFAL…YLTG), 90 to 110 (VSWL…LSMP), 111 to 131 (LILL…PVTF), 133 to 153 (PKLF…VFAV), 157 to 177 (LLFF…LAIW), 189 to 209 (FILY…AMGF), 230 to 250 (GFEL…LPIV), 264 to 284 (TAPV…YALM), 298 to 318 (FAPL…LTSF), 327 to 347 (IAYS…SFSE), 353 to 373 (AMLQ…LVGA), 397 to 417 (FALW…SGFV), 438 to 458 (IVID…LLSM), and 485 to 505 (VYII…PKLM).

The protein belongs to the complex I subunit 4 family.

It is found in the cellular thylakoid membrane. The enzyme catalyses a plastoquinone + NADH + (n+1) H(+)(in) = a plastoquinol + NAD(+) + n H(+)(out). The catalysed reaction is a plastoquinone + NADPH + (n+1) H(+)(in) = a plastoquinol + NADP(+) + n H(+)(out). Functionally, NDH-1 shuttles electrons from NAD(P)H, via FMN and iron-sulfur (Fe-S) centers, to quinones in the respiratory chain. The immediate electron acceptor for the enzyme in this species is believed to be plastoquinone. Couples the redox reaction to proton translocation (for every two electrons transferred, four hydrogen ions are translocated across the cytoplasmic membrane), and thus conserves the redox energy in a proton gradient. This chain is NAD(P)H-quinone oxidoreductase chain 4, found in Synechococcus sp. (strain CC9311).